A 403-amino-acid chain; its full sequence is MKAVGIVVEYNPFHNGHAYHLTQAKKVAKADIVIAVMSGTFLQRGEPAMVDKWTRTKMALAGGVDIVIELPYVYSTAPATDFAKGAISILTAVGCDSFAFGSEDGSIQPFLNTYDLIDNNRTEYDALIKDSLKTGASYPKSLYYAYEQLTQKFPAPYIDLAQPNNILGFHYLEAARTLDSNIKPLTIPRIAAGYHDALKQDSSIASATGIRKALASTSSLQSVQKVVPETSFDYLTDWHRHYKKFASWESFWPLLQFTIMRHTPSELTRYAEVTEGIENAIMKAAKNSSSFNSFMEKIKSKRYTWTRIQRMITHIYTGFTKEQLQSFEAPSFIRLLGMSAKGQAYLGKRKKDIELPLISRVAAANDAMLAIDIHAAELYNLSIEQGVTAQSLPKDYQTPPIRN.

ATP-binding positions include 7–20 (VVEY…HAYH), Gly101, Asn164, and 189–190 (RI).

It belongs to the TmcAL family.

Its subcellular location is the cytoplasm. The enzyme catalyses cytidine(34) in elongator tRNA(Met) + acetate + ATP = N(4)-acetylcytidine(34) in elongator tRNA(Met) + AMP + diphosphate. Functionally, catalyzes the formation of N(4)-acetylcytidine (ac(4)C) at the wobble position of elongator tRNA(Met), using acetate and ATP as substrates. First activates an acetate ion to form acetyladenylate (Ac-AMP) and then transfers the acetyl group to tRNA to form ac(4)C34. The sequence is that of tRNA(Met) cytidine acetate ligase from Lysinibacillus sphaericus (strain C3-41).